A 78-amino-acid polypeptide reads, in one-letter code: Acyl carrier protein (78 aa).

Positions 2-77 (STIEERVKKI…AAIDYILSHQ (76 aa)) constitute a Carrier domain. Serine 37 carries the O-(pantetheine 4'-phosphoryl)serine modification.

The protein belongs to the acyl carrier protein (ACP) family. Post-translationally, 4'-phosphopantetheine is transferred from CoA to a specific serine of apo-ACP by AcpS. This modification is essential for activity because fatty acids are bound in thioester linkage to the sulfhydryl of the prosthetic group.

It is found in the cytoplasm. It functions in the pathway lipid metabolism; fatty acid biosynthesis. Functionally, carrier of the growing fatty acid chain in fatty acid biosynthesis. This is Acyl carrier protein from Tolumonas auensis (strain DSM 9187 / NBRC 110442 / TA 4).